The chain runs to 600 residues: UvrABC system protein C (600 aa).

One can recognise a GIY-YIG domain in the interval 15 to 92; sequence DKPGCYLMKD…IKKYQPYYNV (78 aa). The UVR domain occupies 197-232; the sequence is SQVKQDLTEKMTQASMNLEFERAAEFRDQLKYIEQT.

This sequence belongs to the UvrC family. Interacts with UvrB in an incision complex.

The protein resides in the cytoplasm. Its function is as follows. The UvrABC repair system catalyzes the recognition and processing of DNA lesions. UvrC both incises the 5' and 3' sides of the lesion. The N-terminal half is responsible for the 3' incision and the C-terminal half is responsible for the 5' incision. In Lactobacillus gasseri (strain ATCC 33323 / DSM 20243 / BCRC 14619 / CIP 102991 / JCM 1131 / KCTC 3163 / NCIMB 11718 / NCTC 13722 / AM63), this protein is UvrABC system protein C.